We begin with the raw amino-acid sequence, 403 residues long: Phosphopentomutase (403 aa).

Mn(2+) contacts are provided by Asp-13, Asp-298, His-303, Asp-339, His-340, and His-351.

Belongs to the phosphopentomutase family. Requires Mn(2+) as cofactor.

It is found in the cytoplasm. The catalysed reaction is 2-deoxy-alpha-D-ribose 1-phosphate = 2-deoxy-D-ribose 5-phosphate. It carries out the reaction alpha-D-ribose 1-phosphate = D-ribose 5-phosphate. It functions in the pathway carbohydrate degradation; 2-deoxy-D-ribose 1-phosphate degradation; D-glyceraldehyde 3-phosphate and acetaldehyde from 2-deoxy-alpha-D-ribose 1-phosphate: step 1/2. In terms of biological role, isomerase that catalyzes the conversion of deoxy-ribose 1-phosphate (dRib-1-P) and ribose 1-phosphate (Rib-1-P) to deoxy-ribose 5-phosphate (dRib-5-P) and ribose 5-phosphate (Rib-5-P), respectively. In Streptococcus thermophilus (strain ATCC BAA-491 / LMD-9), this protein is Phosphopentomutase.